Here is a 121-residue protein sequence, read N- to C-terminus: Small ribosomal subunit protein uS12 (121 aa).

The segment at 1–25 is disordered; it reads MPTINQLVRKNRKQKKSQSKSPVLE. The span at 9-18 shows a compositional bias: basic residues; the sequence is RKNRKQKKSQ. The residue at position 89 (Asp89) is a 3-methylthioaspartic acid.

It belongs to the universal ribosomal protein uS12 family. As to quaternary structure, part of the 30S ribosomal subunit. Contacts proteins S8 and S17. May interact with IF1 in the 30S initiation complex.

Its function is as follows. With S4 and S5 plays an important role in translational accuracy. Interacts with and stabilizes bases of the 16S rRNA that are involved in tRNA selection in the A site and with the mRNA backbone. Located at the interface of the 30S and 50S subunits, it traverses the body of the 30S subunit contacting proteins on the other side and probably holding the rRNA structure together. The combined cluster of proteins S8, S12 and S17 appears to hold together the shoulder and platform of the 30S subunit. This Rhodopirellula baltica (strain DSM 10527 / NCIMB 13988 / SH1) protein is Small ribosomal subunit protein uS12.